Here is a 197-residue protein sequence, read N- to C-terminus: RNA pyrophosphohydrolase (197 aa).

One can recognise a Nudix hydrolase domain in the interval 6–149 (GYRPNVGIVI…KRDVYRRAMK (144 aa)). Positions 38-59 (GGINEGETPEQAMFRELFEEVG) match the Nudix box motif. The interval 170-197 (ETKKAETGKKQPYYHKYAPQNKKGRKRR) is disordered.

It belongs to the Nudix hydrolase family. RppH subfamily. The cofactor is a divalent metal cation.

Functionally, accelerates the degradation of transcripts by removing pyrophosphate from the 5'-end of triphosphorylated RNA, leading to a more labile monophosphorylated state that can stimulate subsequent ribonuclease cleavage. In Actinobacillus succinogenes (strain ATCC 55618 / DSM 22257 / CCUG 43843 / 130Z), this protein is RNA pyrophosphohydrolase.